A 296-amino-acid polypeptide reads, in one-letter code: NAD kinase (296 aa).

D73 (proton acceptor) is an active-site residue. NAD(+) is bound by residues 73–74 (DG), K78, 151–152 (NE), R178, D180, and 191–196 (TAHAMS).

The protein belongs to the NAD kinase family. Requires a divalent metal cation as cofactor.

The protein resides in the cytoplasm. It carries out the reaction NAD(+) + ATP = ADP + NADP(+) + H(+). Involved in the regulation of the intracellular balance of NAD and NADP, and is a key enzyme in the biosynthesis of NADP. Catalyzes specifically the phosphorylation on 2'-hydroxyl of the adenosine moiety of NAD to yield NADP. This chain is NAD kinase, found in Francisella tularensis subsp. novicida (strain U112).